We begin with the raw amino-acid sequence, 453 residues long: Ankyrin repeat and SOCS box protein 16 (453 aa).

ANK repeat units lie at residues Cys56 to Met85, Lys110 to Ala139, Gly142 to Val171, Glu175 to Leu204, Ser209 to Leu238, Gln242 to Ala279, and Lys283 to Val312. The region spanning Tyr398 to Gly450 is the SOCS box domain.

This sequence belongs to the ankyrin SOCS box (ASB) family.

It functions in the pathway protein modification; protein ubiquitination. May be a substrate-recognition component of a SCF-like ECS (Elongin-Cullin-SOCS-box protein) E3 ubiquitin-protein ligase complex which mediates the ubiquitination and subsequent proteasomal degradation of target proteins. In Homo sapiens (Human), this protein is Ankyrin repeat and SOCS box protein 16 (ASB16).